The sequence spans 927 residues: MRIKDTLNLGKTKFKMRGNLPVREAEWEKEWEDNHLYEQRLKLNEGHPRFDLHDGPPFANGNIHMGHALNKISKDIIVRYKNMNGYYAPYVPGWDTHGLPVEQQLAKKGIDRKTMDRAKYRELCRQYAEEQVQKQMTDFKRLGVMADWDNPYITLQHEFEGQEIRVFGEMYKKGYIYKGKKPVYWSWSSESTLAEAEVEYKDVEANSIFVAFPVVDSKGIIDPKDTYFVIWTTTPWTIPANEAICVNPKFDYSVVQVGDKKYVVATGLLDKVAEEIGWDDYKVVQTVKGADMEYMKAKHPLYDKESLVTEGFHVTLDDGTGLVHTAPGFGADDFNVGQKYDLPVFSPVDAHGRYTDEVPELEGMFYQDVDKLMVEKLKDAGALLKLKVFTHSYPHDWRTKKPVIFRATTQWFASIAPFRDQILEQIDNAKFIPSWGKTRLYNMIKDRGDWVISRQRAWGVPLPIFYAEDGTPIVTPETIEHIAEIFDKEGSNAWYTHTAKELLPEGFTSEHSPNGEFTKEKDILDVWFDSGSSWSGVMEKRDGLHYPADLYLEGSDQYRGWFNSSLITSVAVTGKAPYKEVLSQGFVLDDKGHKMSKSLGNVISPNDVIKRMGAEIIRLWVAQADTTSDVAVSMGILQQSAESYRKIRNTFRYMLANTSDFDPKENGVAYDDLRSVDQYMEIKLNDLVAECLAAYDKFDFTTVFKKIFNFISNDLSAFYLDFAKDVLYIEGKNSLERRSMQTVIYDAAVKLTKILTPILPHTMEEIWGFLKEPEDYVQLANMPKVENYTNHDELLENWGKFMNLRDDVLKALEDARNKKLIGKSFEAAVTIYPDKETKAMLDDLDADFRQILIVSKLTIVDGEAPENAEKLNNASIVVEHAEGEVCPRCRMIRTDIGEDPKLPELCERCAKIVEEDFPEAAQEGLEE.

The 'HIGH' region signature appears at 57–67 (PFANGNIHMGH). Residue glutamate 553 coordinates L-isoleucyl-5'-AMP. The 'KMSKS' region motif lies at 594-598 (KMSKS). Residue lysine 597 participates in ATP binding. Residues cysteine 886, cysteine 889, cysteine 906, and cysteine 909 each coordinate Zn(2+).

It belongs to the class-I aminoacyl-tRNA synthetase family. IleS type 1 subfamily. Monomer. Requires Zn(2+) as cofactor.

It is found in the cytoplasm. It carries out the reaction tRNA(Ile) + L-isoleucine + ATP = L-isoleucyl-tRNA(Ile) + AMP + diphosphate. In terms of biological role, catalyzes the attachment of isoleucine to tRNA(Ile). As IleRS can inadvertently accommodate and process structurally similar amino acids such as valine, to avoid such errors it has two additional distinct tRNA(Ile)-dependent editing activities. One activity is designated as 'pretransfer' editing and involves the hydrolysis of activated Val-AMP. The other activity is designated 'posttransfer' editing and involves deacylation of mischarged Val-tRNA(Ile). This chain is Isoleucine--tRNA ligase, found in Lactobacillus acidophilus (strain ATCC 700396 / NCK56 / N2 / NCFM).